Reading from the N-terminus, the 323-residue chain is Acetyl esterase (323 aa).

Residues 91-93 (HGG) carry the Involved in the stabilization of the negatively charged intermediate by the formation of the oxyanion hole motif. Active-site residues include Ser165, Asp262, and His292.

This sequence belongs to the 'GDXG' lipolytic enzyme family. In terms of assembly, homodimer. Interacts with MalT and MelA.

It is found in the cytoplasm. In terms of biological role, displays esterase activity towards short chain fatty esters (acyl chain length of up to 8 carbons). Able to hydrolyze triacetylglycerol (triacetin) and tributyrylglycerol (tributyrin), but not trioleylglycerol (triolein) or cholesterol oleate. Negatively regulates MalT activity by antagonizing maltotriose binding. Inhibits MelA galactosidase activity. The protein is Acetyl esterase of Salmonella paratyphi A (strain ATCC 9150 / SARB42).